We begin with the raw amino-acid sequence, 303 residues long: Putative S-adenosyl-L-methionine-dependent methyltransferase Mb1931c (303 aa).

S-adenosyl-L-methionine is bound by residues Asp129 and 158 to 159 (DL).

The protein belongs to the UPF0677 family.

Functionally, exhibits S-adenosyl-L-methionine-dependent methyltransferase activity. The protein is Putative S-adenosyl-L-methionine-dependent methyltransferase Mb1931c of Mycobacterium bovis (strain ATCC BAA-935 / AF2122/97).